The sequence spans 420 residues: Dachshund homolog dac-1 (420 aa).

A disordered region spans residues 23–77; the sequence is PSSSSSSSNNSSSNTSSSNFLSPYEYQESSTSPRDTTDSSGESSLSSSGSSSSLN. Composition is skewed to low complexity over residues 24-41 and 51-77; these read SSSS…SSSN and SSTS…SSLN. The interval 85–171 is DACHbox-N; the sequence is KLIKFRGHNV…LLKTSDFEKL (87 aa). The segment covering 242 to 258 has biased composition (basic and acidic residues); it reads NSFERADDDDQNQRDAD. A disordered region spans residues 242-321; it reads NSFERADDDD…SSSSSGKNDE (80 aa). Residues 263 to 273 show a composition bias toward polar residues; sequence LNLSKSGGNSE. Low complexity predominate over residues 297–317; the sequence is GGSNSNSLSMSMEAGSSSSSG.

Belongs to the DACH/dachshund family. Expressed in AFD, AWC, ASE and ASK neurons. Expressed in the alae.

It is found in the nucleus. In terms of biological role, transcription factor. Plays a role in the thermotactic response. This Caenorhabditis elegans protein is Dachshund homolog dac-1.